A 2967-amino-acid polypeptide reads, in one-letter code: BEACH domain-containing protein lvsD (2967 aa).

Disordered regions lie at residues 1–25 (MSSPLKFPFKQQQQQQQQQRSRIGG), 322–364 (NNNN…SSNS), 588–615 (ILSIDPNNNNNNNNNNNNNIQQPQQQQL), 917–936 (NNSNNNNNNNNSNSNNNNIN), 1077–1105 (GGSNNNNNNNNNNSNNNKDKIDSNNKDKD), 1173–1220 (NTSS…SDHR), 1583–1613 (NNNSGNNNSGNNINNNNNNNNNNTNLNNNEN), 1831–1859 (QQQQQQSQQSLQLPPSPSISNAGSSSSVV), 1921–2009 (PQKT…TLNN), and 2029–2062 (KSTLTSSSSSSPSSNNNNGNSNNNSNNNNNNNKN). Residues 229-491 (MTFRKAPSSV…QDLFRKGSNY (263 aa)) enclose the BEACH 1 domain. The segment covering 1079–1092 (SNNNNNNNNNNSNN) has biased composition (low complexity). The span at 1093 to 1105 (NKDKIDSNNKDKD) shows a compositional bias: basic and acidic residues. Composition is skewed to low complexity over residues 1185–1194 (PLLTSTKSMS), 1583–1611 (NNNSGNNNSGNNINNNNNNNNNNTNLNNN), 1831–1857 (QQQQQQSQQSLQLPPSPSISNAGSSSS), 1926–1980 (QNQH…SFSN), 1993–2006 (NIITTTTTTTTTST), and 2034–2062 (SSSSSSPSSNNNNGNSNNNSNNNNNNNKN). The BEACH-type PH domain maps to 2060 to 2162 (NKNIKLEFST…ICAQILKLIG (103 aa)). BEACH domains lie at 2202 to 2492 (TPQQ…HPQR) and 2628 to 2785 (NSRV…IYSN). WD repeat units follow at residues 2658 to 2710 (NHKS…SDHH) and 2720 to 2761 (GHNF…KSIQ). Disordered stretches follow at residues 2798–2820 (SATTTTTTRDDESSSSSLSSSNT) and 2915–2934 (PSTSVSGDSNSNNNNNNNGN). 2 stretches are compositionally biased toward low complexity: residues 2811–2820 (SSSSLSSSNT) and 2924–2934 (NSNNNNNNNGN).

In Dictyostelium discoideum (Social amoeba), this protein is BEACH domain-containing protein lvsD (lvsD).